Reading from the N-terminus, the 233-residue chain is Phosphonates import ATP-binding protein PhnC 1 (233 aa).

Residues 2–227 (LSVSGLTKRY…PAAALDREDI (226 aa)) enclose the ABC transporter domain. 34 to 41 (GRSGAGKT) serves as a coordination point for ATP.

Belongs to the ABC transporter superfamily. Phosphonates importer (TC 3.A.1.9.1) family. As to quaternary structure, the complex is composed of two ATP-binding proteins (PhnC), two transmembrane proteins (PhnE) and a solute-binding protein (PhnD).

The protein localises to the cell membrane. The enzyme catalyses phosphonate(out) + ATP + H2O = phosphonate(in) + ADP + phosphate + H(+). In terms of biological role, part of the ABC transporter complex PhnCDE involved in phosphonates import. Responsible for energy coupling to the transport system. In Natronomonas pharaonis (strain ATCC 35678 / DSM 2160 / CIP 103997 / JCM 8858 / NBRC 14720 / NCIMB 2260 / Gabara) (Halobacterium pharaonis), this protein is Phosphonates import ATP-binding protein PhnC 1.